Here is a 234-residue protein sequence, read N- to C-terminus: Phosphoribosylaminoimidazole-succinocarboxamide synthase (234 aa).

It belongs to the SAICAR synthetase family.

The enzyme catalyses 5-amino-1-(5-phospho-D-ribosyl)imidazole-4-carboxylate + L-aspartate + ATP = (2S)-2-[5-amino-1-(5-phospho-beta-D-ribosyl)imidazole-4-carboxamido]succinate + ADP + phosphate + 2 H(+). The protein operates within purine metabolism; IMP biosynthesis via de novo pathway; 5-amino-1-(5-phospho-D-ribosyl)imidazole-4-carboxamide from 5-amino-1-(5-phospho-D-ribosyl)imidazole-4-carboxylate: step 1/2. In Streptococcus pyogenes serotype M3 (strain ATCC BAA-595 / MGAS315), this protein is Phosphoribosylaminoimidazole-succinocarboxamide synthase.